Consider the following 127-residue polypeptide: Protein KRTCAP2 homolog (127 aa).

A run of 4 helical transmembrane segments spans residues 13–33 (LISL…SNFF), 41–61 (ILGG…IGAI), 65–85 (VKLL…SSVH), and 87–107 (VSGT…NHAS).

It belongs to the KRTCAP2 family. In terms of assembly, component of the oligosaccharyltransferase (OST) complex.

It is found in the membrane. Subunit of the oligosaccharyl transferase (OST) complex that catalyzes the initial transfer of a defined glycan (Glc(3)Man(9)GlcNAc(2) in eukaryotes) from the lipid carrier dolichol-pyrophosphate to an asparagine residue within an Asn-X-Ser/Thr consensus motif in nascent polypeptide chains, the first step in protein N-glycosylation. N-glycosylation occurs cotranslationally and the complex associates with the Sec61 complex at the channel-forming translocon complex that mediates protein translocation across the endoplasmic reticulum (ER). All subunits are required for a maximal enzyme activity. The protein is Protein KRTCAP2 homolog of Dictyostelium discoideum (Social amoeba).